Reading from the N-terminus, the 377-residue chain is Hsc70-interacting protein 2 (377 aa).

Residues 68–123 (AKANEPANAPEDSEDEKSLSDPESDVELDMEGVIEADSDPAQPMGNYSKKATEEEV) are disordered. Residue serine 80 is modified to Phosphoserine. Positions 89–105 (PESDVELDMEGVIEADS) are enriched in acidic residues. TPR repeat units follow at residues 126 to 159 (ASEL…SPGN), 161 to 193 (LFHA…NSDL), and 195 to 227 (AGYK…DFDE). The stretch at 239–276 (NAKKIEQHRLKQERRQAERKIKERQRDQRRARKEQEKH) forms a coiled coil. A compositionally biased stretch (basic and acidic residues) spans 243-277 (IEQHRLKQERRQAERKIKERQRDQRRARKEQEKHN). 2 disordered regions span residues 243–302 (IEQH…DILG) and 344–377 (DVGA…DGLD). Residues 282–293 (GSSGEFSGGNPG) are compositionally biased toward gly residues. The region spanning 294–336 (NGNMSDILGAMSDPEVSAAIQDILSNPGNITKYASNPKIYNLI) is the STI1 domain. Basic and acidic residues predominate over residues 355–369 (KAGKPSEPKPKKDSA).

It belongs to the FAM10 family. In terms of assembly, homotetramer. Interacts with Hsc70 as well as DNAJ homologs and Hsp90.

The protein resides in the cytoplasm. Its function is as follows. One HIP oligomer binds the ATPase domains of at least two Hsc70 molecules dependent on activation of the Hsc70 ATPase by Hsp40. Stabilizes the ADP state of Hsc70 that has a high affinity for substrate protein. Through its own chaperone activity, it may contribute to the interaction of Hsc70 with various target proteins. This Drosophila melanogaster (Fruit fly) protein is Hsc70-interacting protein 2.